Reading from the N-terminus, the 229-residue chain is Small ribosomal subunit protein uS3 (229 aa).

The KH type-2 domain occupies 17–85 (VKEWIKDEVR…NPQVSVDEVE (69 aa)). Residues 202–229 (LRGESGEDEGDKGDEQGGEAQEAEGAGA) are disordered. Positions 219-229 (GEAQEAEGAGA) are enriched in low complexity.

It belongs to the universal ribosomal protein uS3 family. In terms of assembly, part of the 30S ribosomal subunit.

Its function is as follows. Binds the lower part of the 30S subunit head. This chain is Small ribosomal subunit protein uS3, found in Archaeoglobus fulgidus (strain ATCC 49558 / DSM 4304 / JCM 9628 / NBRC 100126 / VC-16).